Consider the following 245-residue polypeptide: MKQVDLNADLAEGCGSDEALLQLITSANIACAQHAGSIADIRAALAYAQQNGVRIGAHPGYPDRENFGRTEMNLSEADLRACLNYQLGALQALCRDQGLEMAYVKPHGAMYNQAAKNRALADTVARIVADFDPKLKLMALSGSLLLEAGKAAGLGVISEVFADRRYMPDGTLVPRSRPDAQVDSDEEAIAQVLQMVRDGRVKAVNGSLVAVQADSICLHGDGPHAVVFAEKIRQELLAAGIKVSA.

This sequence belongs to the LamB/PxpA family. As to quaternary structure, forms a complex composed of PxpA, PxpB and PxpC.

The catalysed reaction is 5-oxo-L-proline + ATP + 2 H2O = L-glutamate + ADP + phosphate + H(+). Its function is as follows. Catalyzes the cleavage of 5-oxoproline to form L-glutamate coupled to the hydrolysis of ATP to ADP and inorganic phosphate. The polypeptide is 5-oxoprolinase subunit A (Neisseria meningitidis serogroup C (strain 053442)).